The primary structure comprises 926 residues: OTU domain-containing protein 7A (926 aa).

S121 bears the Phosphoserine mark. Residues 170–413 (ERDLIEQATM…AVDPGKDWEW (244 aa)) form a TRAF-binding region. The interval 185–452 (AGRLNWWSTV…VTWIRIPSET (268 aa)) is catalytic. The OTU domain occupies 201–377 (LLPLATTGDG…QAHFSALVSM (177 aa)). Residue D209 is part of the active site. The Nucleophile role is filled by C212. H370 serves as the catalytic Proton acceptor. 3 disordered regions span residues 455 to 517 (PLAQ…DSVA), 540 to 615 (GLVH…GDAW), and 671 to 779 (EQEQ…ARQS). Positions 484-494 (VCSNSNSNNGK) are enriched in low complexity. Over residues 495–513 (NGKDKEKEKQRKDKDKTRA) the composition is skewed to basic and acidic residues. A Nuclear localization signal motif is present at residues 497 to 512 (KDKEKEKQRKDKDKTR). Composition is skewed to low complexity over residues 579–595 (GASA…PSPT), 680–691 (AAAAAAATATAT), and 731–750 (SPGT…AASP). The span at 751-767 (GPGGGARRAAPGTGGPT) shows a compositional bias: gly residues. An Omega-N-methylarginine modification is found at R880. The segment at 884–919 (GPAQRRCQRENCAFYGRAETEHFCSYCYREELRRRR) adopts an A20-type zinc-finger fold. C890, C895, C907, and C910 together coordinate Zn(2+).

This sequence belongs to the peptidase C64 family.

It localises to the cytoplasm. Its subcellular location is the nucleus. It catalyses the reaction Thiol-dependent hydrolysis of ester, thioester, amide, peptide and isopeptide bonds formed by the C-terminal Gly of ubiquitin (a 76-residue protein attached to proteins as an intracellular targeting signal).. Deubiquitinase, which cleaves 'Lys-11'-linked polyubiquitin chains. The chain is OTU domain-containing protein 7A (Otud7a) from Mus musculus (Mouse).